A 130-amino-acid chain; its full sequence is Anti-adapter protein IraD (130 aa).

Belongs to the GpW/Gp25 family. IraD subfamily. In terms of assembly, interacts with RssB.

It is found in the cytoplasm. In terms of biological role, inhibits RpoS proteolysis by regulating RssB activity, thereby increasing the stability of the sigma stress factor RpoS during oxidative stress. Its effect on RpoS stability is due to its interaction with RssB, which probably blocks the interaction of RssB with RpoS, and the consequent delivery of the RssB-RpoS complex to the ClpXP protein degradation pathway. This chain is Anti-adapter protein IraD, found in Shigella boydii serotype 4 (strain Sb227).